A 367-amino-acid polypeptide reads, in one-letter code: Alanine racemase (367 aa).

The Proton acceptor; specific for D-alanine role is filled by K40. K40 is subject to N6-(pyridoxal phosphate)lysine. R136 serves as a coordination point for substrate. The Proton acceptor; specific for L-alanine role is filled by Y263. Residue M310 participates in substrate binding.

The protein belongs to the alanine racemase family. Pyridoxal 5'-phosphate is required as a cofactor.

It catalyses the reaction L-alanine = D-alanine. Its pathway is amino-acid biosynthesis; D-alanine biosynthesis; D-alanine from L-alanine: step 1/1. Functionally, catalyzes the interconversion of L-alanine and D-alanine. May also act on other amino acids. The protein is Alanine racemase (alr) of Lactococcus lactis subsp. cremoris (strain SK11).